A 369-amino-acid chain; its full sequence is MSNSIVGEVYHHVILDVIANSRSDFEENGVDDATLRELQNLWQSKLVATDVATFPWAQAPVGTFPIGQLFDPVSGLRTDSLDVTAPAVANSPILNNIAAIRAVQQMDTFAQQHGNSNYYSPPTPSLPQSATNISFDSSAIPNVQSNPNNTAPFPSYSSNSLQLPTNQTADSPIINDHSTANVTSTGQEHAPDSSSTNSFGGLLLPNQNSPKKSELGETESSNTTPANSRNDVPQTDGAIHDLDDAGSPSNFESNRFAIAQKADAEIYEVLKKNRILQIDGTIEDNEDEKKPPVDTPSDEAINSDLDDPDSDEAPETEEGSDIGQAIVLCLYDKVNHHKNKWKCVFRDGVVGVNGKDYLFFKANGEFEWI.

2 stretches are compositionally biased toward polar residues: residues 113–210 (HGNS…QNSP) and 218–233 (TESS…NDVP). Residues 113 to 248 (HGNSNYYSPP…IHDLDDAGSP (136 aa)) form a disordered region. Phosphoserine is present on serine 249. The segment at 282-319 (IEDNEDEKKPPVDTPSDEAINSDLDDPDSDEAPETEEG) is disordered. Residues 304 to 319 (DLDDPDSDEAPETEEG) are compositionally biased toward acidic residues.

Belongs to the TFIIA subunit 1 family. In terms of assembly, TFIIA is a heterodimer of the large subunit and the small subunit gamma.

It localises to the nucleus. TFIIA is a component of the transcription machinery of RNA polymerase II and plays an important role in transcriptional activation. TFIIA in a complex with tbp mediates transcriptional activity. The protein is Transcription initiation factor IIA large subunit of Schizosaccharomyces pombe (strain 972 / ATCC 24843) (Fission yeast).